A 172-amino-acid chain; its full sequence is Small ribosomal subunit protein uS5 (172 aa).

One can recognise an S5 DRBM domain in the interval 17 to 80; sequence LREKMISVNR…EQARRNMFKV (64 aa).

The protein belongs to the universal ribosomal protein uS5 family. As to quaternary structure, part of the 30S ribosomal subunit. Contacts proteins S4 and S8.

Functionally, with S4 and S12 plays an important role in translational accuracy. Its function is as follows. Located at the back of the 30S subunit body where it stabilizes the conformation of the head with respect to the body. The chain is Small ribosomal subunit protein uS5 from Burkholderia thailandensis (strain ATCC 700388 / DSM 13276 / CCUG 48851 / CIP 106301 / E264).